Consider the following 236-residue polypeptide: 15,16-dihydrobiliverdin:ferredoxin oxidoreductase (236 aa).

The protein belongs to the HY2 family.

It carries out the reaction 15,16-dihydrobiliverdin + oxidized 2[4Fe-4S]-[ferredoxin] = biliverdin IXalpha + reduced 2[4Fe-4S]-[ferredoxin] + 2 H(+). Functionally, catalyzes the two-electron reduction of biliverdin IX-alpha at the C15 methine bridge. This Prochlorococcus marinus (strain MIT 9215) protein is 15,16-dihydrobiliverdin:ferredoxin oxidoreductase.